We begin with the raw amino-acid sequence, 157 residues long: Putative pre-16S rRNA nuclease (157 aa).

The protein belongs to the YqgF nuclease family.

It is found in the cytoplasm. In terms of biological role, could be a nuclease involved in processing of the 5'-end of pre-16S rRNA. The sequence is that of Putative pre-16S rRNA nuclease from Nitrosomonas eutropha (strain DSM 101675 / C91 / Nm57).